We begin with the raw amino-acid sequence, 416 residues long: Gamma-glutamyl phosphate reductase (416 aa).

It belongs to the gamma-glutamyl phosphate reductase family.

Its subcellular location is the cytoplasm. The catalysed reaction is L-glutamate 5-semialdehyde + phosphate + NADP(+) = L-glutamyl 5-phosphate + NADPH + H(+). It participates in amino-acid biosynthesis; L-proline biosynthesis; L-glutamate 5-semialdehyde from L-glutamate: step 2/2. Catalyzes the NADPH-dependent reduction of L-glutamate 5-phosphate into L-glutamate 5-semialdehyde and phosphate. The product spontaneously undergoes cyclization to form 1-pyrroline-5-carboxylate. The protein is Gamma-glutamyl phosphate reductase of Petrotoga mobilis (strain DSM 10674 / SJ95).